A 144-amino-acid chain; its full sequence is Acidic phospholipase A2 (144 aa).

Residues 1 to 19 (MYPAHLLVLLAVCVSLLGA) form the signal peptide. The propeptide occupies 20–27 (SDIPPLPL). 7 cysteine pairs are disulfide-bonded: Cys-38–Cys-98, Cys-54–Cys-143, Cys-56–Cys-72, Cys-71–Cys-125, Cys-78–Cys-118, Cys-87–Cys-111, and Cys-105–Cys-116. Tyr-55, Gly-57, and Gly-59 together coordinate Ca(2+). His-75 is an active-site residue. Asp-76 provides a ligand contact to Ca(2+). Asp-119 is a catalytic residue.

It belongs to the phospholipase A2 family. Group I subfamily. D49 sub-subfamily. It depends on Ca(2+) as a cofactor. As to expression, expressed by the venom gland.

It is found in the secreted. The catalysed reaction is a 1,2-diacyl-sn-glycero-3-phosphocholine + H2O = a 1-acyl-sn-glycero-3-phosphocholine + a fatty acid + H(+). Its function is as follows. PLA2 catalyzes the calcium-dependent hydrolysis of the 2-acyl groups in 3-sn-phosphoglycerides. This is Acidic phospholipase A2 from Aipysurus laevis (Olive sea snake).